The sequence spans 385 residues: Acetylornithine aminotransferase (385 aa).

Residues 95-96 (GA) and Phe-122 each bind pyridoxal 5'-phosphate. Position 125 (Arg-125) interacts with N(2)-acetyl-L-ornithine. 208–211 (DEIQ) serves as a coordination point for pyridoxal 5'-phosphate. Lys-237 is modified (N6-(pyridoxal phosphate)lysine). Residue Thr-265 coordinates N(2)-acetyl-L-ornithine. Pyridoxal 5'-phosphate is bound at residue Thr-266.

This sequence belongs to the class-III pyridoxal-phosphate-dependent aminotransferase family. ArgD subfamily. In terms of assembly, homodimer. The cofactor is pyridoxal 5'-phosphate.

Its subcellular location is the cytoplasm. It carries out the reaction N(2)-acetyl-L-ornithine + 2-oxoglutarate = N-acetyl-L-glutamate 5-semialdehyde + L-glutamate. Its pathway is amino-acid biosynthesis; L-arginine biosynthesis; N(2)-acetyl-L-ornithine from L-glutamate: step 4/4. This is Acetylornithine aminotransferase from Bacillus subtilis (strain 168).